Here is a 2130-residue protein sequence, read N- to C-terminus: Bromodomain adjacent to zinc finger domain protein 2B (2130 aa).

Disordered regions lie at residues 1 to 42, 82 to 118, 151 to 293, 491 to 518, 543 to 633, 756 to 790, and 944 to 966; these read MESG…TGAA, LFAPPAQNHDSTPFHPRTTGKNNRGSLEKGINGSLNG, GGRK…QKQP, KTTGNRTLVVPSTSPVLPGSGKDKPVSN, VDSD…SSIG, EGRRGRPPNPDRQHSREESRMRRRKGRPPNVGSTE, and RKKAEEKERLKQEKRDEKRLNKE. The span at 8-33 shows a compositional bias: low complexity; it reads TSSSVSSTAAASSPVSSTPSVASAVS. Over residues 183–206 the composition is skewed to low complexity; that stretch reads ESSSNSDSDSGSSSDTSSEGISSS. The span at 207–234 shows a compositional bias: acidic residues; that stretch reads DSDDLEEDEEEEEDQSAEESEDDESDSE. A compositionally biased stretch (basic and acidic residues) spans 250–270; the sequence is GVKDMKTDGQKAHEKSQEKRT. Residues 272-283 are compositionally biased toward polar residues; the sequence is QQIPLVSDSQTH. Low complexity predominate over residues 284–293; sequence SSFQSQQKQP. Residues 492–505 show a composition bias toward polar residues; it reads TTGNRTLVVPSTSP. Over residues 543 to 554 the composition is skewed to basic and acidic residues; that stretch reads VDSDAPSSKESD. Residues 555-611 are compositionally biased toward acidic residues; sequence DSNDDDDDDEDEDEDDEDDDSDDSQSESDSNSESDTDGSEDEDDEDDKDQDESDTDT. Positions 623-633 are enriched in low complexity; that stretch reads TGSSIKSSSIG. The region spanning 687 to 762 is the MBD domain; it reads VTDERELRVP…RAMEGRRGRP (76 aa). Positions 756–775 are enriched in basic and acidic residues; it reads EGRRGRPPNPDRQHSREESR. Residues 797 to 984 adopt a coiled-coil conformation; the sequence is AKLLRKLQAQ…ELEMAKELKK (188 aa). The DDT domain maps to 1010 to 1075; the sequence is GSTFSDCLMI…VTAAVCDPGL (66 aa). Disordered stretches follow at residues 1186–1265, 1431–1454, 1499–1545, and 1773–1795; these read TGKR…DQTV, SLCSLQPSVSQSSSEKSDSSNLFS, VTHV…PFAM, and HKKHDGDSAGGGEGSTSSLERKN. Positions 1220-1244 are enriched in acidic residues; the sequence is SDYDDDDDDDSDDQADEDDEDEEDK. Residues 1245–1254 show a composition bias toward basic and acidic residues; it reads EDKKGKKAEV. Pro residues predominate over residues 1514–1526; sequence SHPPSKSPSPVPS. Residues 1895 to 1945 form a PHD-type zinc finger; sequence KVYCQICRKGDNEELLLLCDGCDKGCHTYCHRPKITTIPDGDWFCPACIAK. Positions 1957-2019 are disordered; it reads QIKGKKSNEQ…KQENFTAIKK (63 aa). Over residues 1991–2002 the composition is skewed to basic and acidic residues; sequence GKTEPKKRKMDE. Polar residues predominate over residues 2004-2014; that stretch reads VSVSQGKQENF. The 105-residue stretch at 2022–2126 folds into the Bromo domain; the sequence is RDDSKDLAIC…KYFEKKWTEI (105 aa).

This sequence belongs to the WAL family.

The protein resides in the nucleus. Functionally, regulatory subunit of the ATP-dependent BRF-1 and BRF-5 ISWI chromatin remodeling complexes, which form ordered nucleosome arrays on chromatin and facilitate access to DNA during DNA-templated processes such as DNA replication, transcription, and repair. Both complexes regulate the spacing of nucleosomes along the chromatin and have the ability to slide mononucleosomes to the center of a DNA template. The BRF-1 ISWI chromatin remodeling complex has a lower ATP hydrolysis rate than the BRF-5 ISWI chromatin remodeling complex. Chromatin reader protein. Represses the expression of mitochondrial function-related genes, perhaps by transcriptional regulation. The chain is Bromodomain adjacent to zinc finger domain protein 2B (BAZ2B) from Gallus gallus (Chicken).